We begin with the raw amino-acid sequence, 285 residues long: Bifunctional protein FolD (285 aa).

Residues 165–167 (GRS), Ser-190, and Ile-231 each bind NADP(+).

This sequence belongs to the tetrahydrofolate dehydrogenase/cyclohydrolase family. As to quaternary structure, homodimer.

The enzyme catalyses (6R)-5,10-methylene-5,6,7,8-tetrahydrofolate + NADP(+) = (6R)-5,10-methenyltetrahydrofolate + NADPH. The catalysed reaction is (6R)-5,10-methenyltetrahydrofolate + H2O = (6R)-10-formyltetrahydrofolate + H(+). It functions in the pathway one-carbon metabolism; tetrahydrofolate interconversion. Its function is as follows. Catalyzes the oxidation of 5,10-methylenetetrahydrofolate to 5,10-methenyltetrahydrofolate and then the hydrolysis of 5,10-methenyltetrahydrofolate to 10-formyltetrahydrofolate. This chain is Bifunctional protein FolD, found in Magnetococcus marinus (strain ATCC BAA-1437 / JCM 17883 / MC-1).